The chain runs to 285 residues: Flagellar filament core protein flaB2 (285 aa).

It belongs to the bacterial flagellin family. As to quaternary structure, the flagellum consists of an outer layer composed of two sheath proteins, flaA1 (44 kDa) and flaA2 (35 kDa) around a core that contains three proteins flaB1 (37 kDa), flaB2 (34 kDa) and flaB3 (32 kDa).

The protein localises to the periplasmic flagellum. It is found in the periplasm. Functionally, component of the core of the flagella. The chain is Flagellar filament core protein flaB2 (flaB2) from Brachyspira hyodysenteriae (Treponema hyodysenteriae).